An 864-amino-acid chain; its full sequence is Mitochondrial 15S rRNA processing factor CCM1 (864 aa).

A mitochondrion-targeting transit peptide spans 1–76; that stretch reads MYMARCGPKN…REFSNTLKER (76 aa). 2 stretches are compositionally biased toward polar residues: residues 80 to 94 and 102 to 112; these read TKSVNSDGHQSNSIA and NVNVTKTSSVP. The disordered stretch occupies residues 80–117; that stretch reads TKSVNSDGHQSNSIAPISEDSRNVNVTKTSSVPNEEKS. 2 PPR repeats span residues 319–353 and 356–390; these read NKQNLTTVIQFYSRKEMTKQAWNTFDTMKFLSTKH and DICTYNTMLRICEKERNFPKALDLFQEIQDHNIKP.

Belongs to the CCM1 family. Binds to mitochondrial small subunit 15S rRNA.

The protein resides in the mitochondrion. In terms of biological role, regulates mitochondrial small subunit maturation by controlling 15S rRNA 5'-end processing. Localizes to the 5' precursor of the 15S rRNA in a position that is subsequently occupied by mS47 in the mature yeast mtSSU. Uses structure and sequence-specific RNA recognition, binding to a single-stranded region of the precursor and specifically recognizing bases -6 to -1. The exchange of Ccm1 for mS47 is coupled to the irreversible removal of precursor rRNA that is accompanied by conformational changes of the mitoribosomal proteins uS5m and mS26. These conformational changes signal completion of 5'-end rRNA processing through protection of the mature 5'-end of the 15S rRNA and stabilization of mS47. The removal of the 5' precursor together with the dissociation of Ccm1 may be catalyzed by the 5'-3' exoribonuclease Pet127. Involved in the specific removal of group I introns in mitochondrial encoded transcripts. This is Mitochondrial 15S rRNA processing factor CCM1 from Saccharomyces cerevisiae (strain ATCC 204508 / S288c) (Baker's yeast).